Consider the following 332-residue polypeptide: Biotin synthase (332 aa).

A Radical SAM core domain is found at 46–275; sequence YYGKKVKLNM…SKEIRISGGR (230 aa). [4Fe-4S] cluster is bound by residues Cys64, Cys68, and Cys71. [2Fe-2S] cluster contacts are provided by Cys108, Cys140, Cys200, and Arg270.

This sequence belongs to the radical SAM superfamily. Biotin synthase family. Homodimer. [4Fe-4S] cluster is required as a cofactor. It depends on [2Fe-2S] cluster as a cofactor.

The catalysed reaction is (4R,5S)-dethiobiotin + (sulfur carrier)-SH + 2 reduced [2Fe-2S]-[ferredoxin] + 2 S-adenosyl-L-methionine = (sulfur carrier)-H + biotin + 2 5'-deoxyadenosine + 2 L-methionine + 2 oxidized [2Fe-2S]-[ferredoxin]. Its pathway is cofactor biosynthesis; biotin biosynthesis; biotin from 7,8-diaminononanoate: step 2/2. Functionally, catalyzes the conversion of dethiobiotin (DTB) to biotin by the insertion of a sulfur atom into dethiobiotin via a radical-based mechanism. This Lysinibacillus sphaericus (Bacillus sphaericus) protein is Biotin synthase.